Reading from the N-terminus, the 307-residue chain is Thiamine-monophosphate kinase (307 aa).

Residues Asp26, Thr37, Thr38, and Asp39 each coordinate Mg(2+). Substrate is bound at residue His46. 2 residues coordinate Mg(2+): Asp68 and Asp117. Residues 116-117 (GD) and Arg140 each bind ATP. A Mg(2+)-binding site is contributed by Asp207. An ATP-binding site is contributed by Thr209. Asp210 lines the Mg(2+) pocket. 2 residues coordinate substrate: Glu254 and Phe304.

The protein belongs to the thiamine-monophosphate kinase family.

The catalysed reaction is thiamine phosphate + ATP = thiamine diphosphate + ADP. Its pathway is cofactor biosynthesis; thiamine diphosphate biosynthesis; thiamine diphosphate from thiamine phosphate: step 1/1. Catalyzes the ATP-dependent phosphorylation of thiamine-monophosphate (TMP) to form thiamine-pyrophosphate (TPP), the active form of vitamin B1. This Leptospira interrogans serogroup Icterohaemorrhagiae serovar Lai (strain 56601) protein is Thiamine-monophosphate kinase.